The following is a 503-amino-acid chain: Catalase (503 aa).

The signal sequence occupies residues 1–21 (MHMSKSFLIISMGFVAVSVQA). Catalysis depends on residues H72 and N145. Y353 lines the heme pocket.

This sequence belongs to the catalase family. Requires heme as cofactor.

It is found in the periplasm. It catalyses the reaction 2 H2O2 = O2 + 2 H2O. Decomposes hydrogen peroxide into water and oxygen; serves to protect cells from the toxic effects of hydrogen peroxide. This is Catalase from Vibrio cholerae serotype O1 (strain ATCC 39315 / El Tor Inaba N16961).